A 631-amino-acid chain; its full sequence is MLSRVVRQRSRSAISSFKLRAHAAFAETRIGVGISVQATRLQSTKLSANPEEIYTKISDSADPKRNQFFQYTWGSWLENDKLKKSHRETRFSIEGVSNLVQELNLTRKDPANVDSSGEPLLQIKPVQQLKDGSFVLTNNLSNKLIGEAQDKDAKLLVKSIASIHEGKDLVLRIPYKLESDYSISQKIKSEVATLDFLSLKLGLNVPKVVAYGDNRSNALQTPFILMEYIEGDLLMKKWNPLAADSEETDASLKSVIQPISDFQDKILSVNFNKFGSLYFHDDVSVLDQADVPYDGEENPLLVNRWRIGPSIERQFAKNKNHLSEKIVKEFNGPWKADAPLSLITSVASIELENAKNRLGLAQADSASKVEDVEVLKKQIETFEHLQAIGSKLFNSKSKSIMNVEELFRPKLFVPDLDPLNVIESNDKSYFIDFEYSTIKPFILTSYPNFVAYHGAKVYNLEEDIPGFTEMDEVEKQQYEFMYYKTRNERLWELELNSRRHDLIAVASPHVKVLKSPYLQALELKTDKDYLYVEGAIVQLQAMWDAYVANELCGSSSSEFPVQYTEEFLDRHQTDLEEYQIETVSSPFAATGGWIPQDMFETLKEQGIIVETENGNYKVEAEKALEEEPEEK.

Residues 1–41 (MLSRVVRQRSRSAISSFKLRAHAAFAETRIGVGISVQATRL) constitute a mitochondrion transit peptide.

The protein belongs to the AIM9 family.

It localises to the mitochondrion. In Scheffersomyces stipitis (strain ATCC 58785 / CBS 6054 / NBRC 10063 / NRRL Y-11545) (Yeast), this protein is Altered inheritance of mitochondria protein 9, mitochondrial (AIM9).